A 421-amino-acid polypeptide reads, in one-letter code: TITAN-like protein (421 aa).

The segment at 11–32 (EFCTVCRFHHDQGSRHKYFPRH) adopts a C2H2-type 1; degenerate zinc-finger fold. Residues 70–100 (VWCVFCDEDIVELGSSFACSKAINHFASSDH) form a C2H2-type 2; degenerate zinc finger. The disordered stretch occupies residues 279 to 306 (ISSSHSTDAGGNVHSGAPPPWLDANDGD). 2 short sequence motifs (nuclear localization signal) span residues 328–335 (NRKLNPNR) and 377–384 (TRKESRKE). The segment at 376–421 (GTRKESRKEFEKEKRKLVKTESISTESEPVKIQPYISKRARRESGE) is disordered. A compositionally biased stretch (basic and acidic residues) spans 377–389 (TRKESRKEFEKEK).

In terms of tissue distribution, also present in cotyledons, hypocotyls, stems, veins of sepals and stigmas, and actively dividing tissues such as shoot apical meristem, root tips and emerging true leaves. Weak expression in petals and anthers, and not detected in mature leaves. In seeds, expressed in both the endosperm and embryo.

It is found in the nucleus. Key regulator for endosperm and embryo nuclear divisions. The sequence is that of TITAN-like protein from Arabidopsis thaliana (Mouse-ear cress).